The chain runs to 308 residues: Low density lipoprotein receptor adapter protein 1 (308 aa).

Met1 bears the N-acetylmethionine mark. Residues Ser14, Ser186, and Ser202 each carry the phosphoserine modification. Residues 42–196 enclose the PID domain; it reads LLEGMLFSLK…QEGGDVLGAR (155 aa). Positions 212-216 match the Clathrin box motif; sequence LLDLE. An AP-2 complex binding region spans residues 249 to 276; that stretch reads WELDDGLDEAFSRLAQSRTNPQVLDTGL. The [DE]-X(1,2)-F-X-X-[FL]-X-X-X-R motif motif lies at 257-266; sequence EAFSRLAQSR.

Interacts (via PID domain) with LDLR (via NPXY motif). Binds to soluble clathrin trimers. Interacts with AP2B1; the interaction mediates the association with the AP-2 complex. Interacts with VLDLR. Interacts with LRP2. As to expression, expressed at high levels in the kidney, liver, and placenta, with lower levels detectable in brain, heart, muscle, colon, spleen, intestine, lung, and leukocytes.

The protein localises to the cytoplasm. Adapter protein (clathrin-associated sorting protein (CLASP)) required for efficient endocytosis of the LDL receptor (LDLR) in polarized cells such as hepatocytes and lymphocytes, but not in non-polarized cells (fibroblasts). May be required for LDL binding and internalization but not for receptor clustering in coated pits. May facilitate the endocytosis of LDLR and LDLR-LDL complexes from coated pits by stabilizing the interaction between the receptor and the structural components of the pits. May also be involved in the internalization of other LDLR family members. Binds to phosphoinositides, which regulate clathrin bud assembly at the cell surface. Required for trafficking of LRP2 to the endocytic recycling compartment which is necessary for LRP2 proteolysis, releasing a tail fragment which translocates to the nucleus and mediates transcriptional repression. This Homo sapiens (Human) protein is Low density lipoprotein receptor adapter protein 1.